Reading from the N-terminus, the 446-residue chain is tRNA modification GTPase MnmE (446 aa).

(6S)-5-formyl-5,6,7,8-tetrahydrofolate-binding residues include R24, E81, and K120. Residues 216-368 (GLHAVLIGPP…LHTRLRELAL (153 aa)) enclose the TrmE-type G domain. N226 contributes to the K(+) binding site. Residues 226-231 (NAGKSS), 245-251 (TDVAGTT), and 270-273 (DTAG) each bind GTP. S230 is a Mg(2+) binding site. K(+) contacts are provided by T245, V247, and T250. T251 lines the Mg(2+) pocket. Position 446 (K446) interacts with (6S)-5-formyl-5,6,7,8-tetrahydrofolate.

Belongs to the TRAFAC class TrmE-Era-EngA-EngB-Septin-like GTPase superfamily. TrmE GTPase family. As to quaternary structure, homodimer. Heterotetramer of two MnmE and two MnmG subunits. It depends on K(+) as a cofactor.

It localises to the cytoplasm. Functionally, exhibits a very high intrinsic GTPase hydrolysis rate. Involved in the addition of a carboxymethylaminomethyl (cmnm) group at the wobble position (U34) of certain tRNAs, forming tRNA-cmnm(5)s(2)U34. The protein is tRNA modification GTPase MnmE of Xanthomonas campestris pv. campestris (strain B100).